A 159-amino-acid chain; its full sequence is Phosphopantetheine adenylyltransferase (159 aa).

S9 contacts substrate. Residues 9–10 and H17 each bind ATP; that span reads SF. 3 residues coordinate substrate: K41, L73, and K87. Residues 88-90, E98, and 123-129 each bind ATP; these read GLR and YSYLSSS.

It belongs to the bacterial CoaD family. As to quaternary structure, homohexamer. Mg(2+) serves as cofactor.

The protein resides in the cytoplasm. The catalysed reaction is (R)-4'-phosphopantetheine + ATP + H(+) = 3'-dephospho-CoA + diphosphate. It participates in cofactor biosynthesis; coenzyme A biosynthesis; CoA from (R)-pantothenate: step 4/5. In terms of biological role, reversibly transfers an adenylyl group from ATP to 4'-phosphopantetheine, yielding dephospho-CoA (dPCoA) and pyrophosphate. The polypeptide is Phosphopantetheine adenylyltransferase (Clostridium botulinum (strain Alaska E43 / Type E3)).